A 97-amino-acid chain; its full sequence is Coiled-coil domain-containing protein 167 (97 aa).

Positions 2–78 (TKKKRENLGV…LLRHENRKNT (77 aa)) form a coiled coil. A helical membrane pass occupies residues 78–95 (TLLSVAIFTVFALLYAYW).

The protein resides in the membrane. The sequence is that of Coiled-coil domain-containing protein 167 (Ccdc167) from Mus musculus (Mouse).